Here is a 189-residue protein sequence, read N- to C-terminus: UPF0301 protein PP_4995 (189 aa).

This sequence belongs to the UPF0301 (AlgH) family.

In Pseudomonas putida (strain ATCC 47054 / DSM 6125 / CFBP 8728 / NCIMB 11950 / KT2440), this protein is UPF0301 protein PP_4995.